The chain runs to 532 residues: Cytochrome P450 monooxygenase criE (532 aa).

Residues 18-38 traverse the membrane as a helical segment; that stretch reads VSPAALSWAVVAVYIGTFFWL. Cys441 provides a ligand contact to heme.

The protein belongs to the cytochrome P450 family. The cofactor is heme.

The protein localises to the membrane. It catalyses the reaction preechinulin + reduced [NADPH--hemoprotein reductase] + O2 = neoechinulin A + oxidized [NADPH--hemoprotein reductase] + 2 H2O + H(+). Its pathway is secondary metabolite biosynthesis. The protein operates within alkaloid biosynthesis. Cytochrome P450 monooxygenase; part of the gene cluster that mediates the biosynthesis of echinulin family alkaloid. The pathway begins with the biosynthesis of the cyclic dipeptide cyclo-L-Trp-L-Ala (cyclo-TA) by the NRPS criC via condensation of L-alanine and L-tryptophan. The prenyltransferase criA then catalyzes the first prenylation step, a reverse prenylation reaction at C2, to yield preechinulin. Preechinulin is the substrate of the cytochrome P450 monooxygenase criE that catalyzes the formation of the double bond between C10 and C11 to produce neoechulin A. The unique prenyltransferase criF functions as a competitive enzyme with criE for preechinulin metabolization and uses preechinulin for effective regiospecific prenylations. Preechinulin is prenylated by criF at C5 or C7. C7-prenylation leads to accumulation of tardioxopiperazine B without further modification by criF. In contrast, the C5-prenylated tardioxopiperazine A can be prenylated again by criF, predominantly at C7 to form echinulin or less frequently at C4 to give variecolorin L. CriF also accepts neoechilunin A to produce varlecolorin G (prenylation at C5) or isoechinulin A (prenylation at C7). CriF further converts isoechinulin A into dehydroechinulin. Moreover, a yet unidentified enzyme can also convert neoechilunin A into neoechilunin B by introducing a double bond between positions C14 and C17 and thus provides a further substrate to criF for C5 and C7 prenylation. The chain is Cytochrome P450 monooxygenase criE from Aspergillus cristatus (Chinese Fuzhuan brick tea-fermentation fungus).